Consider the following 354-residue polypeptide: Ferrochelatase (354 aa).

Positions 214 and 295 each coordinate Fe cation.

It belongs to the ferrochelatase family.

The protein localises to the cytoplasm. The catalysed reaction is heme b + 2 H(+) = protoporphyrin IX + Fe(2+). Its pathway is porphyrin-containing compound metabolism; protoheme biosynthesis; protoheme from protoporphyrin-IX: step 1/1. Functionally, catalyzes the ferrous insertion into protoporphyrin IX. The chain is Ferrochelatase from Burkholderia vietnamiensis (strain G4 / LMG 22486) (Burkholderia cepacia (strain R1808)).